A 179-amino-acid polypeptide reads, in one-letter code: Casparian strip membrane protein 1 (179 aa).

Residues 1 to 17 lie on the Cytoplasmic side of the membrane; that stretch reads MKAGPLQLGVVPPANRA. Residues 18–38 traverse the membrane as a helical segment; sequence IAILDFFLRPIAIVGTLASAI. The Extracellular segment spans residues 39–67; that stretch reads AMATTNQTLPFFSQFIRFRAKFNDLPSFT. An N-linked (GlcNAc...) asparagine glycan is attached at N44. The chain crosses the membrane as a helical span at residues 68-88; sequence FFVVASSIVSAYLILSLGFSI. Residues 89 to 100 are Cytoplasmic-facing; the sequence is LHIAKSNLVNSR. The helical transmembrane segment at 101-121 threads the bilayer; sequence VLLLLLDTAAMGLLMAGSAAA. At 122 to 154 the chain is on the extracellular side; sequence TAIVQLAHKGNNKVNWFAICQQYNSFCKRVSGS. Residues 155–175 form a helical membrane-spanning segment; the sequence is LIGSYAGVVVLILLILLSGVA. Residues 176-179 are Cytoplasmic-facing; that stretch reads LSRR.

It belongs to the Casparian strip membrane proteins (CASP) family. In terms of assembly, homodimer and heterodimers.

Its subcellular location is the cell membrane. In terms of biological role, regulates membrane-cell wall junctions and localized cell wall deposition. Required for establishment of the Casparian strip membrane domain (CSD) and the subsequent formation of Casparian strips, a cell wall modification of the root endodermis that determines an apoplastic barrier between the intraorganismal apoplasm and the extraorganismal apoplasm and prevents lateral diffusion. In Lactuca sativa (Garden lettuce), this protein is Casparian strip membrane protein 1.